Consider the following 450-residue polypeptide: MLKYFGTDGVRGVANQGLTPEMAFKLGRDGGYVLTKNKKDGEQAKVLVSRDTRISGQMLEYALISGLLSVGIEVLEVGVITTPGLSYLVRAQGADAGVQISASHNPVEDNGIKFFGSDGLKLSDEMEEEIEKLIDAKGDNLPRPSAEGLGTVTDFHEGSAKYLQFIENTIPEDLDGIKVVIDGANGASSALISRLFADCGVDFTTIYTHPNGLNINDHCGATHTENLQKEVVKQGAQLGLAFDGDADRCIAVDENGNEVDGDHIMYVIGSYLAEHGRLKKDTIVTTVMSNLGFTKALEKEGLKNVRTQVGDRYVSEEMRAHGYNLGGEQSGHVIMSDYHNTGDGMLTGLHLMLVMKKTGKSLSELLKDFKDYPQGLVNVPVKDKKSWKEHQPILDVIAEVEKDMNGNGRVLVRPSGTQDLLRVMAEGPTQEETDAYVDRIVKVVEKEMGK.

Residue Ser-103 is the Phosphoserine intermediate of the active site. Mg(2+) is bound by residues Ser-103, Asp-243, Asp-245, and Asp-247. Phosphoserine is present on Ser-103.

This sequence belongs to the phosphohexose mutase family. The cofactor is Mg(2+). Activated by phosphorylation.

The catalysed reaction is alpha-D-glucosamine 1-phosphate = D-glucosamine 6-phosphate. Catalyzes the conversion of glucosamine-6-phosphate to glucosamine-1-phosphate. In Lactobacillus helveticus (strain DPC 4571), this protein is Phosphoglucosamine mutase.